A 314-amino-acid chain; its full sequence is Acetyl-coenzyme A carboxylase carboxyl transferase subunit alpha (314 aa).

The CoA carboxyltransferase C-terminal domain maps to 32-289 (EIDMLEASLK…KKMFLKHLNE (258 aa)).

It belongs to the AccA family. As to quaternary structure, acetyl-CoA carboxylase is a heterohexamer composed of biotin carboxyl carrier protein (AccB), biotin carboxylase (AccC) and two subunits each of ACCase subunit alpha (AccA) and ACCase subunit beta (AccD).

The protein localises to the cytoplasm. The enzyme catalyses N(6)-carboxybiotinyl-L-lysyl-[protein] + acetyl-CoA = N(6)-biotinyl-L-lysyl-[protein] + malonyl-CoA. It functions in the pathway lipid metabolism; malonyl-CoA biosynthesis; malonyl-CoA from acetyl-CoA: step 1/1. Component of the acetyl coenzyme A carboxylase (ACC) complex. First, biotin carboxylase catalyzes the carboxylation of biotin on its carrier protein (BCCP) and then the CO(2) group is transferred by the carboxyltransferase to acetyl-CoA to form malonyl-CoA. The polypeptide is Acetyl-coenzyme A carboxylase carboxyl transferase subunit alpha (Staphylococcus epidermidis (strain ATCC 12228 / FDA PCI 1200)).